A 971-amino-acid polypeptide reads, in one-letter code: Translation initiation factor IF-2 (971 aa).

The span at 49–63 (HLRKSHGATDGDKRK) shows a compositional bias: basic and acidic residues. Disordered regions lie at residues 49 to 86 (HLRKSHGATDGDKRKITLTRKHTSEIKQSDATGKARTI) and 101 to 385 (DVAE…APTE). Residues 105 to 114 (GAEQGQAQVA) are compositionally biased toward low complexity. Residues 121-177 (ELKRREEEARREAELLEKQAQELRERQERLEREEAERRAREEAAEAQRRRAEEEAAA) are compositionally biased toward basic and acidic residues. A compositionally biased stretch (low complexity) spans 178–209 (KRAAAAAVEAQQVAAQQAAEAQQETAGAQSAQ). The segment covering 210-261 (DEARAAAERAAQREAAKKAEDAAREAADKTRAEQEEIRKRREAAEAEARAIR) has biased composition (basic and acidic residues). Positions 277–286 (PPKPVEPPKP) are enriched in pro residues. Residues 298–325 (KPAGASAARPAVKKPAGAAPATTAPAGA) are compositionally biased toward low complexity. The span at 355 to 368 (SSGGVDRGWRGGPK) shows a compositional bias: gly residues. Residues 471–640 (PRPPVVTVMG…LLQAEVLELK (170 aa)) enclose the tr-type G domain. The interval 480–487 (GHVDHGKT) is G1. 480–487 (GHVDHGKT) provides a ligand contact to GTP. Residues 505–509 (GITQH) are G2. The G3 stretch occupies residues 526-529 (DTPG). GTP contacts are provided by residues 526-530 (DTPGH) and 580-583 (NKID). Residues 580 to 583 (NKID) form a G4 region. The interval 616-618 (SAK) is G5.

It belongs to the TRAFAC class translation factor GTPase superfamily. Classic translation factor GTPase family. IF-2 subfamily.

Its subcellular location is the cytoplasm. In terms of biological role, one of the essential components for the initiation of protein synthesis. Protects formylmethionyl-tRNA from spontaneous hydrolysis and promotes its binding to the 30S ribosomal subunits. Also involved in the hydrolysis of GTP during the formation of the 70S ribosomal complex. In Burkholderia ambifaria (strain ATCC BAA-244 / DSM 16087 / CCUG 44356 / LMG 19182 / AMMD) (Burkholderia cepacia (strain AMMD)), this protein is Translation initiation factor IF-2.